The following is a 668-amino-acid chain: DNA ligase (668 aa).

NAD(+)-binding positions include 37-41 (DAVYD), 86-87 (SM), and Glu-116. Residue Lys-118 is the N6-AMP-lysine intermediate of the active site. The NAD(+) site is built by Arg-139, Glu-173, Lys-288, and Lys-312. Cys-406, Cys-409, Cys-424, and Cys-429 together coordinate Zn(2+). The BRCT domain occupies 590–668 (APDNFFKEKT…EQEAIAKIEK (79 aa)).

Belongs to the NAD-dependent DNA ligase family. LigA subfamily. Mg(2+) is required as a cofactor. It depends on Mn(2+) as a cofactor.

The enzyme catalyses NAD(+) + (deoxyribonucleotide)n-3'-hydroxyl + 5'-phospho-(deoxyribonucleotide)m = (deoxyribonucleotide)n+m + AMP + beta-nicotinamide D-nucleotide.. Functionally, DNA ligase that catalyzes the formation of phosphodiester linkages between 5'-phosphoryl and 3'-hydroxyl groups in double-stranded DNA using NAD as a coenzyme and as the energy source for the reaction. It is essential for DNA replication and repair of damaged DNA. This Lactobacillus johnsonii (strain CNCM I-12250 / La1 / NCC 533) protein is DNA ligase.